Reading from the N-terminus, the 366-residue chain is Growth hormone secretagogue receptor type 1 (366 aa).

Residues 1–40 (MWNATPSEEPGPNLTLPDLGWDAPPENDSLVEELLPLFPT) are Extracellular-facing. Residues Asn-13 and Asn-27 are each glycosylated (N-linked (GlcNAc...) asparagine). A helical membrane pass occupies residues 41-66 (PLLAGVTATCVALFVVGIAGNLLTML). The Cytoplasmic segment spans residues 67–72 (VVSRFR). Residues 73–96 (EMRTTTNLYLSSMAFSDLLIFLCM) traverse the membrane as a helical segment. Over 97 to 117 (PLDLFRLWQYRPWNLGNLLCK) the chain is Extracellular. A disulfide bond links Cys-116 and Cys-198. The helical transmembrane segment at 118-139 (LFQFVSESCTYATVLTITALSV) threads the bilayer. Topologically, residues 140 to 162 (ERYFAICFPLRAKVVVTKGRVKL) are cytoplasmic. Residues 163 to 183 (VILVIWAVAFCSAGPIFVLVG) traverse the membrane as a helical segment. At 184–211 (VEHDNGTDPRDTNECRATEFAVRSGLLT) the chain is on the extracellular side. A helical membrane pass occupies residues 212-235 (VMVWVSSVFFFLPVFCLTVLYSLI). Residues 236-263 (GRKLWRRKRGEAAVGSSLRDQNHKQTVK) lie on the Cytoplasmic side of the membrane. A helical transmembrane segment spans residues 264 to 285 (MLAVVVFAFILCWLPFHVGRYL). Over 286 to 302 (FSKSLEPGSVEIAQISQ) the chain is Extracellular. A helical transmembrane segment spans residues 303–326 (YCNLVSFVLFYLSAAINPILYNIM). At 327–366 (SKKYRVAVFKLLGFEPFSQRKLSTLKDESSRAWTESSINT) the chain is on the cytoplasmic side.

Belongs to the G-protein coupled receptor 1 family. In terms of tissue distribution, pituitary and hypothalamus.

The protein resides in the cell membrane. Functionally, receptor for ghrelin, coupled to G-alpha-11 proteins. Stimulates growth hormone secretion. Also binds other growth hormone releasing peptides (GHRP) (e.g. Met-enkephalin and GHRP-6) as well as non-peptide, low molecular weight secretagogues (e.g. L-692,429, MK-0677, adenosine). The sequence is that of Growth hormone secretagogue receptor type 1 (GHSR) from Sus scrofa (Pig).